The sequence spans 279 residues: Large ribosomal subunit protein uL2 (279 aa).

The segment at 223 to 279 (VAMNPIDHPHGGGEGRTSGGRHPVTPWGKGTKGTRTRSNKSTDKYILRSRHAKKKGR) is disordered. Residues 269–279 (LRSRHAKKKGR) are compositionally biased toward basic residues.

The protein belongs to the universal ribosomal protein uL2 family. Part of the 50S ribosomal subunit. Forms a bridge to the 30S subunit in the 70S ribosome.

One of the primary rRNA binding proteins. Required for association of the 30S and 50S subunits to form the 70S ribosome, for tRNA binding and peptide bond formation. It has been suggested to have peptidyltransferase activity; this is somewhat controversial. Makes several contacts with the 16S rRNA in the 70S ribosome. This is Large ribosomal subunit protein uL2 from Paracoccus denitrificans (strain Pd 1222).